Here is a 255-residue protein sequence, read N- to C-terminus: Epoxyqueuosine reductase QueH (255 aa).

[4Fe-4S] cluster contacts are provided by cysteine 44, cysteine 45, cysteine 128, and cysteine 131. A disulfide bridge links cysteine 210 with cysteine 212.

It belongs to the QueH family.

It catalyses the reaction epoxyqueuosine(34) in tRNA + AH2 = queuosine(34) in tRNA + A + H2O. Its pathway is tRNA modification; tRNA-queuosine biosynthesis. Functionally, catalyzes the conversion of epoxyqueuosine (oQ) to queuosine (Q), which is a hypermodified base found in the wobble positions of tRNA(Asp), tRNA(Asn), tRNA(His) and tRNA(Tyr). This chain is Epoxyqueuosine reductase QueH, found in Streptococcus pyogenes serotype M1.